The sequence spans 1240 residues: Selection and upkeep of intraepithelial T-cells protein 6 (1240 aa).

The first 24 residues, 1-24, serve as a signal peptide directing secretion; the sequence is MGTIGVPLTAHCVVLFLLQMVALS. Residues 25 to 1086 lie on the Extracellular side of the membrane; the sequence is TEQFTVNGLE…CNKRNPFWKK (1062 aa). One can recognise an Ig-like V-type domain in the interval 26–141; it reads EQFTVNGLES…EEHIIEVKVT (116 aa). Residues C49 and C123 are joined by a disulfide bond. Residues 142–231 enclose the Ig-like C1-type domain; it reads ATSSDIQILM…FVTHQEESIS (90 aa). N155, N200, and N314 each carry an N-linked (GlcNAc...) asparagine glycan. C163 and C217 are disulfide-bonded. Residues 1087–1107 traverse the membrane as a helical segment; that stretch reads HALDLGISVFAIIVVTLIRHL. Topologically, residues 1108 to 1125 are cytoplasmic; it reads NQREADQHFELDTLWSKD. A helical transmembrane segment spans residues 1126–1146; the sequence is TSVILCVLIMFNNRLKALIYF. The Extracellular portion of the chain corresponds to 1147 to 1167; it reads RLYGYSPPGKTYKYIVNYILR. A helical transmembrane segment spans residues 1168–1188; that stretch reads FSQPLFFIVYSAIILVMHLQI. The Cytoplasmic segment spans residues 1189–1205; that stretch reads QNTDSLFSLYNSWMVEM. Residues 1206 to 1226 traverse the membrane as a helical segment; it reads IMVLGLLLAIFNVKNIATALL. Topologically, residues 1227–1240 are extracellular; the sequence is HLGRTTLRLFRIKD.

This sequence belongs to the SKINT family. As to expression, expressed in skin.

The protein resides in the membrane. Functionally, may act by engaging a cell surface molecule on immature T-cells in the embryonic thymus. This chain is Selection and upkeep of intraepithelial T-cells protein 6 (Skint6), found in Mus musculus (Mouse).